The primary structure comprises 226 residues: Orotate phosphoribosyltransferase (226 aa).

5-phospho-alpha-D-ribose 1-diphosphate-binding positions include arginine 107, lysine 108, lysine 111, and 133-141 (EDLTTDGGS). Threonine 137 contacts orotate.

It belongs to the purine/pyrimidine phosphoribosyltransferase family. PyrE subfamily. Homodimer. Mg(2+) serves as cofactor.

It carries out the reaction orotidine 5'-phosphate + diphosphate = orotate + 5-phospho-alpha-D-ribose 1-diphosphate. It functions in the pathway pyrimidine metabolism; UMP biosynthesis via de novo pathway; UMP from orotate: step 1/2. Functionally, catalyzes the transfer of a ribosyl phosphate group from 5-phosphoribose 1-diphosphate to orotate, leading to the formation of orotidine monophosphate (OMP). The sequence is that of Orotate phosphoribosyltransferase from Ruegeria sp. (strain TM1040) (Silicibacter sp.).